We begin with the raw amino-acid sequence, 344 residues long: GDSL esterase/lipase At5g03590 (344 aa).

The first 19 residues, 1 to 19, serve as a signal peptide directing secretion; that stretch reads MHYLMKLFFSLSLFFGING. Serine 41 (nucleophile) is an active-site residue. Residues asparagine 126, asparagine 227, and asparagine 238 are each glycosylated (N-linked (GlcNAc...) asparagine). Residue aspartate 318 is part of the active site.

It belongs to the 'GDSL' lipolytic enzyme family.

The protein resides in the secreted. The polypeptide is GDSL esterase/lipase At5g03590 (Arabidopsis thaliana (Mouse-ear cress)).